The primary structure comprises 587 residues: Folylpolyglutamate synthase, mitochondrial (587 aa).

Residues 1-42 constitute a mitochondrion transit peptide; sequence MSWARTHLRSALSLAAVSARGATTEGAARRWLSAWPAPQEPG. 106–109 contacts ATP; the sequence is GKGS. Mg(2+) is bound by residues Ser130, Glu200, and His228. 2 residues coordinate ATP: Arg363 and Asp377. The tract at residues 484–508 is disordered; it reads PDFLSSPSPEPGRPGSLQPALRPPH. Ser539 carries the post-translational modification Phosphoserine.

The protein belongs to the folylpolyglutamate synthase family. In terms of assembly, monomer. A monovalent cation is required as a cofactor.

The protein resides in the mitochondrion inner membrane. It localises to the mitochondrion matrix. Its subcellular location is the cytoplasm. The catalysed reaction is (6S)-5,6,7,8-tetrahydrofolyl-(gamma-L-Glu)(n) + L-glutamate + ATP = (6S)-5,6,7,8-tetrahydrofolyl-(gamma-L-Glu)(n+1) + ADP + phosphate + H(+). It functions in the pathway cofactor biosynthesis; tetrahydrofolylpolyglutamate biosynthesis. Catalyzes conversion of folates to polyglutamate derivatives allowing concentration of folate compounds in the cell and the intracellular retention of these cofactors, which are important substrates for most of the folate-dependent enzymes that are involved in one-carbon transfer reactions involved in purine, pyrimidine and amino acid synthesis. This Cricetulus griseus (Chinese hamster) protein is Folylpolyglutamate synthase, mitochondrial (FPGS).